Consider the following 510-residue polypeptide: 1,3-beta-glucanosyltransferase gas5 (510 aa).

Positions 1 to 22 (MNFLHFLTTSLLLLGGSRLALA) are cleaved as a signal peptide. Cysteines 70 and 99 form a disulfide. Tyr-88 contacts (1,3-beta-D-glucosyl)n. N-linked (GlcNAc...) asparagine glycosylation is present at Asn-147. 4 residues coordinate (1,3-beta-D-glucosyl)n: Asn-158, Glu-159, Asp-200, and Arg-205. Glu-159 (proton donor) is an active-site residue. 2 disulfide bridges follow: Cys-214/Cys-353 and Cys-232/Cys-264. 2 N-linked (GlcNAc...) asparagine glycosylation sites follow: Asn-216 and Asn-252. Catalysis depends on Glu-261, which acts as the Nucleophile. Tyr-300 is a (1,3-beta-D-glucosyl)n binding site. Residues Asn-318, Asn-337, and Asn-397 are each glycosylated (N-linked (GlcNAc...) asparagine). The tract at residues 424–456 (QSSTSGSSSGSSSASTTASSSSVSSGSSISSGS) is disordered. Ser-485 carries the GPI-anchor amidated serine lipid modification. Residues 486-510 (SASTFNLSRFYVFAGILAISGLVFA) constitute a propeptide, removed in mature form. Asn-491 carries an N-linked (GlcNAc...) asparagine glycan.

Belongs to the glycosyl hydrolase 72 family. Post-translationally, the GPI-anchor is attached to the protein in the endoplasmic reticulum and serves to target the protein to the cell surface. There, the glucosamine-inositol phospholipid moiety is cleaved off and the GPI-modified mannoprotein is covalently attached via its lipidless GPI glycan remnant to the 1,6-beta-glucan of the outer cell wall layer.

It is found in the secreted. The protein resides in the cell wall. The protein localises to the membrane. Its function is as follows. Splits internally a 1,3-beta-glucan molecule and transfers the newly generated reducing end (the donor) to the non-reducing end of another 1,3-beta-glucan molecule (the acceptor) forming a 1,3-beta linkage, resulting in the elongation of 1,3-beta-glucan chains in the cell wall. In Schizosaccharomyces pombe (strain 972 / ATCC 24843) (Fission yeast), this protein is 1,3-beta-glucanosyltransferase gas5 (gas5).